We begin with the raw amino-acid sequence, 515 residues long: Protein disulfide-isomerase (515 aa).

A signal peptide spans 1 to 20 (MRSFAPWLVSLLGASAVVAA). Thioredoxin domains follow at residues 21–132 (ADTE…QSLP) and 339–470 (VLDG…ENGK). Catalysis depends on nucleophile residues C54, C57, C389, and C392. Cystine bridges form between C54–C57 and C389–C392. The disordered stretch occupies residues 478-515 (VASEETQEGGDVTEAAPSATEAETPAATDDEKAEHDEL). The span at 490–504 (TEAAPSATEAETPAA) shows a compositional bias: low complexity. The span at 506–515 (DDEKAEHDEL) shows a compositional bias: basic and acidic residues. A Prevents secretion from ER motif is present at residues 512-515 (HDEL).

It belongs to the protein disulfide isomerase family.

Its subcellular location is the endoplasmic reticulum lumen. The enzyme catalyses Catalyzes the rearrangement of -S-S- bonds in proteins.. Participates in the folding of proteins containing disulfide bonds, may be involved in glycosylation, prolyl hydroxylation and triglyceride transfer. This chain is Protein disulfide-isomerase (pdiA), found in Aspergillus niger.